A 690-amino-acid chain; its full sequence is Adhesion G protein-coupled receptor L4 (690 aa).

The first 19 residues, 1–19 (MKRLPLLVVFSTLLNCSYT), serve as a signal peptide directing secretion. The 38-residue stretch at 20-57 (QNCTKTPCLPNAKCEIRNGIEACYCNMGFSGNGVTICE) folds into the EGF-like 1 domain. At 20-432 (QNCTKTPCLP…DYNILTRITQ (413 aa)) the chain is on the extracellular side. A glycan (N-linked (GlcNAc...) asparagine) is linked at N21. 6 cysteine pairs are disulfide-bonded: C22/C33, C27/C42, C44/C56, C62/C75, C69/C84, and C86/C107. The EGF-like 2; calcium-binding domain occupies 58-108 (DDNECGNLTQSCGENANCTNTEGSYYCMCVPGFRSSSNQDRFITNDGTVCI). N-linked (GlcNAc...) asparagine glycosylation is found at N64 and N74. N-linked (GlcNAc...) asparagine glycosylation is found at N127, N177, N188, N249, N381, and N395. Residues 244-419 (TEFDTNSTDI…AILMSSGPSI (176 aa)) enclose the GAIN-B domain. Intrachain disulfides connect C370–C401 and C389–C403. Residues 370–419 (CAFWNYSPDTMNGSWSSEGCELTYSNETHTSCRCNHLTHFAILMSSGPSI) are GPS. A helical transmembrane segment spans residues 433–453 (LGIIISLICLAICIFTFWFFS). The Cytoplasmic portion of the chain corresponds to 454-460 (EIQSTRT). A helical transmembrane segment spans residues 461–481 (TIHKNLCCSLFLAELVFLVGI). Residues 482 to 499 (NTNTNKLFCSIIAGLLHY) lie on the Extracellular side of the membrane. Residues 500 to 520 (FFLAAFAWMCIEGIHLYLIVV) form a helical membrane-spanning segment. Residues 521 to 532 (GVIYNKGFLHKN) lie on the Cytoplasmic side of the membrane. The chain crosses the membrane as a helical span at residues 533–553 (FYIFGYLSPAVVVGFSAALGY). Over 554 to 573 (RYYGTTKVCWLSTENNFIWS) the chain is Extracellular. A helical membrane pass occupies residues 574 to 594 (FIGPACLIILVNLLAFGVIIY). Residues 595–618 (KVFRHTAGLKPEVSCFENIRSCAR) lie on the Cytoplasmic side of the membrane. Residues 619–639 (GALALLFLLGTTWIFGVLHVV) traverse the membrane as a helical segment. At 640 to 646 (HASVVTA) the chain is on the extracellular side. A helical membrane pass occupies residues 647–667 (YLFTVSNAFQGMFIFLFLCVL). Residues 668-690 (SRKIQEEYYRLFKNVPCCFGCLR) are Cytoplasmic-facing.

Belongs to the G-protein coupled receptor 2 family. Adhesion G-protein coupled receptor (ADGR) subfamily. In terms of assembly, heterodimer of 2 chains generated by proteolytic processing; the large extracellular N-terminal fragment and the membrane-bound C-terminal fragment predominantly remain associated and non-covalently linked. Post-translationally, glycosylated. In terms of processing, proteolytically cleaved into 2 subunits, an extracellular alpha subunit and a seven-transmembrane subunit. In terms of tissue distribution, detected in the majority of epithelial cells in tumor and normal tissues. Expressed also in human umbilical vein endothelial cells.

Its subcellular location is the cell membrane. Functionally, endothelial orphan receptor that acts as a key regulator of angiogenesis. This chain is Adhesion G protein-coupled receptor L4, found in Homo sapiens (Human).